The primary structure comprises 343 residues: Putative adenosine/adenine deaminase (343 aa).

Zn(2+) contacts are provided by H16, H18, and H204. H18 serves as a coordination point for substrate. The active-site Proton donor is E207. D285 contributes to the Zn(2+) binding site. D286 serves as a coordination point for substrate.

The protein belongs to the metallo-dependent hydrolases superfamily. Adenosine and AMP deaminases family. The cofactor is Zn(2+).

Putative nucleoside deaminase. May catalyze the hydrolytic deamination of adenosine or some similar substrate and play a role in purine metabolism. In Streptomyces coelicolor (strain ATCC BAA-471 / A3(2) / M145), this protein is Putative adenosine/adenine deaminase.